We begin with the raw amino-acid sequence, 302 residues long: Glycine--tRNA ligase alpha subunit (302 aa).

The protein belongs to the class-II aminoacyl-tRNA synthetase family. In terms of assembly, tetramer of two alpha and two beta subunits.

It localises to the cytoplasm. It carries out the reaction tRNA(Gly) + glycine + ATP = glycyl-tRNA(Gly) + AMP + diphosphate. In Xanthomonas euvesicatoria pv. vesicatoria (strain 85-10) (Xanthomonas campestris pv. vesicatoria), this protein is Glycine--tRNA ligase alpha subunit.